Reading from the N-terminus, the 297-residue chain is Juvenile hormone acid O-methyltransferase (297 aa).

The protein belongs to the methyltransferase superfamily. Predominantly expressed in corpora allata. Also expressed at low level in testis.

It carries out the reaction (2E,6E)-farnesoate + S-adenosyl-L-methionine = methyl (2E,6E)-farnesoate + S-adenosyl-L-homocysteine. It catalyses the reaction juvenile hormone III carboxylate + S-adenosyl-L-methionine = juvenile hormone III + S-adenosyl-L-homocysteine. O-methyltransferase that transfers a methyl group from S-adenosyl-L-methionine (SAM) to the carboxyl group of juvenile hormone acids to produce active juvenile hormones in the corpora allata, the last step during juvenile hormone biosynthesis. Also able to methylate farnesoate to methyl farnesoate. This Drosophila melanogaster (Fruit fly) protein is Juvenile hormone acid O-methyltransferase.